The chain runs to 116 residues: Ribonuclease P protein component (116 aa).

It belongs to the RnpA family. As to quaternary structure, consists of a catalytic RNA component (M1 or rnpB) and a protein subunit.

The catalysed reaction is Endonucleolytic cleavage of RNA, removing 5'-extranucleotides from tRNA precursor.. Its function is as follows. RNaseP catalyzes the removal of the 5'-leader sequence from pre-tRNA to produce the mature 5'-terminus. It can also cleave other RNA substrates such as 4.5S RNA. The protein component plays an auxiliary but essential role in vivo by binding to the 5'-leader sequence and broadening the substrate specificity of the ribozyme. The protein is Ribonuclease P protein component of Mycobacterium bovis (strain ATCC BAA-935 / AF2122/97).